A 62-amino-acid polypeptide reads, in one-letter code: uncharacterized protein (62 aa).

The segment at 17 to 62 (YNNYNNNNNNNNNNNNNNNNNNNNNNNNNNNNNNNNNNNNNNKNNN) is disordered.

This is an uncharacterized protein from Dictyostelium discoideum (Social amoeba).